A 313-amino-acid chain; its full sequence is Putative S-adenosyl-L-methionine-dependent methyltransferase MAP_3563 (313 aa).

S-adenosyl-L-methionine contacts are provided by residues Asp-139 and 168 to 169 (DL).

Belongs to the UPF0677 family.

Its function is as follows. Exhibits S-adenosyl-L-methionine-dependent methyltransferase activity. This chain is Putative S-adenosyl-L-methionine-dependent methyltransferase MAP_3563, found in Mycolicibacterium paratuberculosis (strain ATCC BAA-968 / K-10) (Mycobacterium paratuberculosis).